The sequence spans 559 residues: Protochlorophyllide-dependent translocon component 52, chloroplastic (559 aa).

The N-terminal 55 residues, 1 to 55 (MEAALAACALPSLRILNTKPRFRCSFSNPSLPISPNSLITRKSSRFTTAVSSPPS), are a transit peptide targeting the chloroplast. The interval 44 to 70 (SRFTTAVSSPPSSSAATSTNSPPEPEA) is disordered. The segment covering 47–64 (TTAVSSPPSSSAATSTNS) has biased composition (low complexity). In terms of domain architecture, Rieske spans 85–195 (WYPVMPICDL…STVQHEIIWF (111 aa)). The [2Fe-2S] cluster site is built by Cys127, His129, Cys147, and His150. Positions 248 and 253 each coordinate Fe cation. A Redox-active motif motif is present at residues 483–486 (CSSC). Helical transmembrane passes span 493-513 (LNALEVILQIASVAMIGVMAV) and 525-545 (IAVLVAAVLSFAASKWLSHFI).

It depends on [2Fe-2S] cluster as a cofactor.

The protein resides in the plastid. It is found in the chloroplast inner membrane. The catalysed reaction is protochlorophyllide a + 4 reduced [2Fe-2S]-[ferredoxin] + 2 O2 + 5 H(+) = protochlorophyllide b + 4 oxidized [2Fe-2S]-[ferredoxin] + 3 H2O. Its activity is regulated as follows. Down-regulated by light. Part of a translocon most abundantly expressed in etiolated plants and involved in the protochlorophyllide-dependent import of the precursor NADPH:protochlorophyllide oxidoreductase A (pPORA). This is Protochlorophyllide-dependent translocon component 52, chloroplastic from Arabidopsis thaliana (Mouse-ear cress).